The chain runs to 102 residues: Small ribosomal subunit protein uS10 (102 aa).

The protein belongs to the universal ribosomal protein uS10 family. In terms of assembly, part of the 30S ribosomal subunit.

In terms of biological role, involved in the binding of tRNA to the ribosomes. In Bifidobacterium adolescentis (strain ATCC 15703 / DSM 20083 / NCTC 11814 / E194a), this protein is Small ribosomal subunit protein uS10.